The following is a 354-amino-acid chain: Tryptophan--tRNA ligase (354 aa).

ATP contacts are provided by residues 13–15 (QPT) and 21–22 (GN). The short motif at 14 to 22 (PTGNLHLGN) is the 'HIGH' region element. Asp137 lines the L-tryptophan pocket. ATP contacts are provided by residues 149-151 (GDD), Val208, and 217-221 (KMSKS). The 'KMSKS' region motif lies at 217-221 (KMSKS).

This sequence belongs to the class-I aminoacyl-tRNA synthetase family. In terms of assembly, homodimer.

Its subcellular location is the cytoplasm. The catalysed reaction is tRNA(Trp) + L-tryptophan + ATP = L-tryptophyl-tRNA(Trp) + AMP + diphosphate + H(+). Catalyzes the attachment of tryptophan to tRNA(Trp). This is Tryptophan--tRNA ligase from Agrobacterium fabrum (strain C58 / ATCC 33970) (Agrobacterium tumefaciens (strain C58)).